Reading from the N-terminus, the 472-residue chain is Zinc finger and BTB domain-containing protein 18.2 (472 aa).

The BTB domain occupies 24–91 (CDCTVLVGEA…MYEGKLEFSN (68 aa)). Positions 127–149 (KIIDDGEKDDKPVDSEEHHEHSF) are enriched in basic and acidic residues. 3 disordered regions span residues 127–155 (KIIDDGEKDDKPVDSEEHHEHSFDASQQK), 197–236 (AGKTKANDSSPSSPLSQRSANHTHPPSDRDGALDLSFKPM), and 269–334 (DLLS…LSTS). Residues 205-215 (SSPSSPLSQRS) are compositionally biased toward low complexity. The segment covering 279–288 (AKSPKSQQVG) has biased composition (polar residues). Residues 309-319 (HTREDDLYQDR) are compositionally biased toward basic and acidic residues. 4 C2H2-type zinc fingers span residues 344-366 (CICPLCSKVFPSPHILQLHLSSH), 384-406 (PTCTICGKTFSCMYTLKRHERTH), 412-434 (FTCGQCGKSFQYSHNLSRHAVVH), and 440-463 (HACKWCERRFTQSGDLYRHIRKFH).

Belongs to the krueppel C2H2-type zinc-finger protein family. ZBTB18 subfamily.

The protein localises to the nucleus. Functionally, transcriptional repressor that plays a role in various developmental processes. Specifically binds the consensus DNA sequence 5'-[AC]ACATCTG[GT][AC]-3' which contains the E box core, and acts by recruiting chromatin remodeling multiprotein complexes. This chain is Zinc finger and BTB domain-containing protein 18.2 (zbtb18.2), found in Xenopus laevis (African clawed frog).